The chain runs to 475 residues: Ribulose bisphosphate carboxylase large chain (475 aa).

Positions 123 and 173 each coordinate substrate. Lysine 175 acts as the Proton acceptor in catalysis. Lysine 177 provides a ligand contact to substrate. The Mg(2+) site is built by lysine 201, aspartate 203, and glutamate 204. Lysine 201 carries the post-translational modification N6-carboxylysine. Histidine 294 functions as the Proton acceptor in the catalytic mechanism. Substrate contacts are provided by arginine 295, histidine 327, and serine 379.

It belongs to the RuBisCO large chain family. Type I subfamily. In terms of assembly, heterohexadecamer of 8 large chains and 8 small chains; disulfide-linked. The disulfide link is formed within the large subunit homodimers. Mg(2+) serves as cofactor. In terms of processing, the disulfide bond which can form in the large chain dimeric partners within the hexadecamer appears to be associated with oxidative stress and protein turnover.

It localises to the plastid. The protein localises to the chloroplast. It carries out the reaction 2 (2R)-3-phosphoglycerate + 2 H(+) = D-ribulose 1,5-bisphosphate + CO2 + H2O. The enzyme catalyses D-ribulose 1,5-bisphosphate + O2 = 2-phosphoglycolate + (2R)-3-phosphoglycerate + 2 H(+). RuBisCO catalyzes two reactions: the carboxylation of D-ribulose 1,5-bisphosphate, the primary event in carbon dioxide fixation, as well as the oxidative fragmentation of the pentose substrate in the photorespiration process. Both reactions occur simultaneously and in competition at the same active site. The polypeptide is Ribulose bisphosphate carboxylase large chain (Euglena gracilis).